Consider the following 549-residue polypeptide: Urocanate hydratase (549 aa).

NAD(+)-binding positions include 46-47 (GG), glutamine 124, 170-172 (GMG), glutamate 190, arginine 195, 236-237 (NA), 257-261 (QTSAH), 267-268 (YV), and tyrosine 316. Cysteine 404 is a catalytic residue. Glycine 486 lines the NAD(+) pocket.

The protein belongs to the urocanase family. It depends on NAD(+) as a cofactor.

It is found in the cytoplasm. It catalyses the reaction 4-imidazolone-5-propanoate = trans-urocanate + H2O. It participates in amino-acid degradation; L-histidine degradation into L-glutamate; N-formimidoyl-L-glutamate from L-histidine: step 2/3. Functionally, catalyzes the conversion of urocanate to 4-imidazolone-5-propionate. This is Urocanate hydratase from Natranaerobius thermophilus (strain ATCC BAA-1301 / DSM 18059 / JW/NM-WN-LF).